We begin with the raw amino-acid sequence, 386 residues long: Succinate--CoA ligase [ADP-forming] subunit beta (386 aa).

In terms of domain architecture, ATP-grasp spans 9–237 (KEVLRDFGVN…LSAEHPLEVE (229 aa)). Residues Lys-45, 52 to 54 (GRG), Val-94, and Glu-101 contribute to the ATP site. 2 residues coordinate Mg(2+): Asn-192 and Asp-206. Residues Asn-258 and 315–317 (GIT) contribute to the substrate site.

It belongs to the succinate/malate CoA ligase beta subunit family. In terms of assembly, heterotetramer of two alpha and two beta subunits. It depends on Mg(2+) as a cofactor.

The catalysed reaction is succinate + ATP + CoA = succinyl-CoA + ADP + phosphate. It carries out the reaction GTP + succinate + CoA = succinyl-CoA + GDP + phosphate. It functions in the pathway carbohydrate metabolism; tricarboxylic acid cycle; succinate from succinyl-CoA (ligase route): step 1/1. In terms of biological role, succinyl-CoA synthetase functions in the citric acid cycle (TCA), coupling the hydrolysis of succinyl-CoA to the synthesis of either ATP or GTP and thus represents the only step of substrate-level phosphorylation in the TCA. The beta subunit provides nucleotide specificity of the enzyme and binds the substrate succinate, while the binding sites for coenzyme A and phosphate are found in the alpha subunit. This chain is Succinate--CoA ligase [ADP-forming] subunit beta, found in Deinococcus radiodurans (strain ATCC 13939 / DSM 20539 / JCM 16871 / CCUG 27074 / LMG 4051 / NBRC 15346 / NCIMB 9279 / VKM B-1422 / R1).